The chain runs to 305 residues: Elongation factor Ts (305 aa).

Residues 81 to 84 (TDFV) are involved in Mg(2+) ion dislocation from EF-Tu.

This sequence belongs to the EF-Ts family.

It localises to the cytoplasm. In terms of biological role, associates with the EF-Tu.GDP complex and induces the exchange of GDP to GTP. It remains bound to the aminoacyl-tRNA.EF-Tu.GTP complex up to the GTP hydrolysis stage on the ribosome. The chain is Elongation factor Ts from Nitratiruptor sp. (strain SB155-2).